A 105-amino-acid chain; its full sequence is uncharacterized protein (105 aa).

This is an uncharacterized protein from Schizosaccharomyces pombe (strain 972 / ATCC 24843) (Fission yeast).